Here is a 357-residue protein sequence, read N- to C-terminus: Homeobox protein HMX3 (357 aa).

Disordered stretches follow at residues Met-1–Pro-58 and Leu-129–Lys-229. Residues Pro-16–Lys-27 are compositionally biased toward pro residues. Composition is skewed to basic and acidic residues over residues Pro-130–Leu-140 and Thr-149–Asp-173. Phosphoserine occurs at positions 153 and 180. Residues Ala-191–Ala-209 show a composition bias toward low complexity. The span at Glu-210 to Pro-223 shows a compositional bias: basic and acidic residues. The segment at residues Lys-227–Leu-286 is a DNA-binding region (homeobox).

It belongs to the HMX homeobox family.

The protein localises to the nucleus. Functionally, transcription factor involved in specification of neuronal cell types and which is required for inner ear and hypothalamus development. Binds to the 5'-CAAGTG-3' core sequence. Controls semicircular canal formation in the inner ear. Also required for hypothalamic/pituitary axis of the CNS. The sequence is that of Homeobox protein HMX3 (HMX3) from Homo sapiens (Human).